We begin with the raw amino-acid sequence, 272 residues long: Putative pyruvate, phosphate dikinase regulatory protein (272 aa).

153–160 (GVSRTSKT) serves as a coordination point for ADP.

It belongs to the pyruvate, phosphate/water dikinase regulatory protein family. PDRP subfamily.

It catalyses the reaction N(tele)-phospho-L-histidyl/L-threonyl-[pyruvate, phosphate dikinase] + ADP = N(tele)-phospho-L-histidyl/O-phospho-L-threonyl-[pyruvate, phosphate dikinase] + AMP + H(+). The catalysed reaction is N(tele)-phospho-L-histidyl/O-phospho-L-threonyl-[pyruvate, phosphate dikinase] + phosphate + H(+) = N(tele)-phospho-L-histidyl/L-threonyl-[pyruvate, phosphate dikinase] + diphosphate. Its function is as follows. Bifunctional serine/threonine kinase and phosphorylase involved in the regulation of the pyruvate, phosphate dikinase (PPDK) by catalyzing its phosphorylation/dephosphorylation. This chain is Putative pyruvate, phosphate dikinase regulatory protein, found in Chelativorans sp. (strain BNC1).